Reading from the N-terminus, the 191-residue chain is SCO2-like protein RP031 (191 aa).

It belongs to the SCO1/2 family.

In Rickettsia prowazekii (strain Madrid E), this protein is SCO2-like protein RP031.